Reading from the N-terminus, the 483-residue chain is Nuc-1 negative regulatory protein preg (483 aa).

Low complexity-rich tracts occupy residues 1–32, 60–80, and 176–200; these read MLTRSPASAAATSPTTTVTVTVTAAATSPRPS, SSRRQSATAPATSSTSLPISI, and ASALASTSEATAAPIPHGPTVAVAV. Disordered regions lie at residues 1–112, 164–234, and 434–483; these read MLTR…SRPQ, NTVG…SQGD, and CPEP…RHAT. Residues 435-473 are compositionally biased toward acidic residues; sequence PEPEEADDEDEDEELDESDAIGDDDDDIDGEGGEREEET.

The protein belongs to the cyclin family.

Negative regulator, together with pgov, of the transcriptional activator nuc-1, which controls the expression of phosphorous acquisition enzymes. This chain is Nuc-1 negative regulatory protein preg (preg), found in Neurospora crassa (strain ATCC 24698 / 74-OR23-1A / CBS 708.71 / DSM 1257 / FGSC 987).